Reading from the N-terminus, the 422-residue chain is Putative nickel insertion protein (422 aa).

It belongs to the LarC family.

The protein is Putative nickel insertion protein of Synechocystis sp. (strain ATCC 27184 / PCC 6803 / Kazusa).